Reading from the N-terminus, the 979-residue chain is UPF0182 protein Mb0065 (979 aa).

The next 7 helical transmembrane spans lie at 19-41 (LVTA…DIYV), 63-85 (LAIV…LLAY), 114-136 (LFGW…FDWV), 174-196 (WLFV…FGGL), 208-230 (AARV…AYWL), 261-280 (LVLV…AIFL), and 285-307 (IPAM…WPLL). Positions 898 to 948 (GTGRVATAPGGDAASAPPPGAGGPAPPQAVPPPRTTQPPAAPPRGPDVPPA) are disordered. Low complexity predominate over residues 902–912 (VATAPGGDAAS). Residues 913-946 (APPPGAGGPAPPQAVPPPRTTQPPAAPPRGPDVP) show a composition bias toward pro residues.

The protein belongs to the UPF0182 family.

Its subcellular location is the cell membrane. The sequence is that of UPF0182 protein Mb0065 from Mycobacterium bovis (strain ATCC BAA-935 / AF2122/97).